Reading from the N-terminus, the 465-residue chain is GTPase Der (465 aa).

EngA-type G domains lie at 3–167 and 179–352; these read PLVA…PEEG and IRIA…ESAN. Residues 9–16, 57–61, 119–122, 185–192, 232–236, and 297–300 contribute to the GTP site; these read GRPNVGKS, DTGGI, NKID, DTAGL, and NKWD. The KH-like domain maps to 353-437; the sequence is KTFTTSEVNK…PVSFIFREGT (85 aa).

The protein belongs to the TRAFAC class TrmE-Era-EngA-EngB-Septin-like GTPase superfamily. EngA (Der) GTPase family. As to quaternary structure, associates with the 50S ribosomal subunit.

Functionally, GTPase that plays an essential role in the late steps of ribosome biogenesis. This chain is GTPase Der, found in Stenotrophomonas maltophilia (strain R551-3).